The primary structure comprises 316 residues: 4-hydroxy-3-methylbut-2-enyl diphosphate reductase (316 aa).

Residue C12 participates in [4Fe-4S] cluster binding. The (2E)-4-hydroxy-3-methylbut-2-enyl diphosphate site is built by H41 and H74. H41 and H74 together coordinate dimethylallyl diphosphate. H41 and H74 together coordinate isopentenyl diphosphate. C96 contributes to the [4Fe-4S] cluster binding site. H124 lines the (2E)-4-hydroxy-3-methylbut-2-enyl diphosphate pocket. A dimethylallyl diphosphate-binding site is contributed by H124. H124 is a binding site for isopentenyl diphosphate. Catalysis depends on E126, which acts as the Proton donor. T167 contributes to the (2E)-4-hydroxy-3-methylbut-2-enyl diphosphate binding site. Residue C197 coordinates [4Fe-4S] cluster. (2E)-4-hydroxy-3-methylbut-2-enyl diphosphate-binding residues include S225, S226, N227, and S269. Dimethylallyl diphosphate contacts are provided by S225, S226, N227, and S269. S225, S226, N227, and S269 together coordinate isopentenyl diphosphate.

It belongs to the IspH family. As to quaternary structure, homodimer. Requires [4Fe-4S] cluster as cofactor.

The catalysed reaction is isopentenyl diphosphate + 2 oxidized [2Fe-2S]-[ferredoxin] + H2O = (2E)-4-hydroxy-3-methylbut-2-enyl diphosphate + 2 reduced [2Fe-2S]-[ferredoxin] + 2 H(+). The enzyme catalyses dimethylallyl diphosphate + 2 oxidized [2Fe-2S]-[ferredoxin] + H2O = (2E)-4-hydroxy-3-methylbut-2-enyl diphosphate + 2 reduced [2Fe-2S]-[ferredoxin] + 2 H(+). It participates in isoprenoid biosynthesis; dimethylallyl diphosphate biosynthesis; dimethylallyl diphosphate from (2E)-4-hydroxy-3-methylbutenyl diphosphate: step 1/1. It functions in the pathway isoprenoid biosynthesis; isopentenyl diphosphate biosynthesis via DXP pathway; isopentenyl diphosphate from 1-deoxy-D-xylulose 5-phosphate: step 6/6. Its function is as follows. Catalyzes the conversion of 1-hydroxy-2-methyl-2-(E)-butenyl 4-diphosphate (HMBPP) into a mixture of isopentenyl diphosphate (IPP) and dimethylallyl diphosphate (DMAPP). Acts in the terminal step of the DOXP/MEP pathway for isoprenoid precursor biosynthesis. This chain is 4-hydroxy-3-methylbut-2-enyl diphosphate reductase, found in Cronobacter sakazakii (strain ATCC BAA-894) (Enterobacter sakazakii).